The sequence spans 1050 residues: TSC22 domain family protein 1 (1050 aa).

Residues 1–99 (MHQPPESTAA…SQAQLQGQPL (99 aa)) are required for interaction with TGFBR1 and promotion of TGF-beta signaling. Disordered regions lie at residues 22–111 (MAHP…KKSG), 126–285 (ISSN…VSSA), 445–479 (QTPT…SVGS), 511–531 (DFSS…VQLQ), 581–609 (LAQP…QLQY), 720–740 (VQPP…PPSS), 795–847 (QLPT…GSLV), and 879–919 (SLAQ…VSDG). Positions 38 to 55 (ASALSAAGTGVSGAAPSS) are enriched in low complexity. The segment covering 58–71 (FPPPSSLLQPPPPA) has biased composition (pro residues). Positions 85-97 (SLNLLSQAQLQGQ) are enriched in low complexity. Acidic residues predominate over residues 134 to 143 (EDTESYDDLD). Residues 217 to 241 (HPHHLHHHHHIHHGHHLHHGHHHSS) show a composition bias toward basic residues. Position 265 is a phosphoserine (Ser-265). Residues 458-476 (TSGSSVSSSVSTLSHYTES) are compositionally biased toward low complexity. The segment covering 586-603 (LPYPQPAPPVQTPLPGAP) has biased composition (pro residues). Over residues 906–919 (LSGDSGGVSAVSDG) the composition is skewed to low complexity. Positions 983–1004 (LKEQIKELIEKNSQLEQENNLL) are leucine-zipper. The segment at 1015–1050 (QFQAQLQTGSPPATTQPQGTTQPPAQPASQGSGSTA) is disordered. Over residues 1021–1050 (QTGSPPATTQPQGTTQPPAQPASQGSGSTA) the composition is skewed to low complexity.

This sequence belongs to the TSC-22/Dip/Bun family. As to quaternary structure, forms homodimers. Forms heterodimers. Component of a complex composed of TSC22D1 (via N-terminus), TGFBR1 and TGFBR2; the interaction between TSC22D1 and TGFBR1 is inhibited by SMAD7 and promoted by TGFB1. Interacts with SMAD7; the interaction requires TGF-beta and the interaction is inhibited by TGFBR1. Interacts with TPT1/fortilin; interaction results in the destabilization of TSC22D1 protein and prevents TSC22D1-mediated apoptosis. Interacts with SMAD4 (via N-terminus). Interacts with ACVRL1/ALK1, ACVR1/ALK2, BMPR1A/ALK3, ACVR1B/ALK4, BMPR1B/ALK6, ACVR2A/ACTRII, and BMPR2. Interacts with SMAD6. Interacts with TFE3; the interaction is enhanced in the presence of TGF-beta. In terms of assembly, forms a heterodimer with TSC22D4/THG1. Forms a heterodimer with TSC22D4/THG1. Interacts with histone H1-2. Interacts with GNL3. In terms of tissue distribution, ubiquitously expressed, abundantly expressed in testis, ovary, uterus, and lung. Expressed in cardiomyocytes.

The protein resides in the cytoplasm. It is found in the nucleus. The protein localises to the cell membrane. Its subcellular location is the mitochondrion. Transcriptional repressor. Acts on the C-type natriuretic peptide (CNP) promoter. Acts to promote CASP3-mediated apoptosis. Positively regulates TGF-beta signaling by interacting with SMAD7 which inhibits binding of SMAD7 to TGFBR1, preventing recruitment of SMURF ubiquitin ligases to TGFBR1 and inhibiting SMURF-mediated ubiquitination and degradation of TGFBR1. Contributes to enhancement of TGF-beta signaling by binding to and modulating the transcription activator activity of SMAD4. Promotes TGF-beta-induced transcription of COL1A2; via its interaction with TFE3 at E-boxes in the gene proximal promoter. Plays a role in the repression of hematopoietic precursor cell growth. Promotes IL2 deprivation-induced apoptosis in T-lymphocytes, via repression of TSC22D3/GILZ transcription and activation of the caspase cascade. Functionally, may act to negatively regulate TGFB3 signaling and thereby inhibit cell death in mammary gland cells. In terms of biological role, positively regulates cell death in response to TGFB3 during mammary gland involution. The chain is TSC22 domain family protein 1 from Rattus norvegicus (Rat).